Consider the following 889-residue polypeptide: Disease resistance protein RPS5 (889 aa).

Glycine 2 carries N-myristoyl glycine lipidation. Residue cysteine 4 is the site of S-palmitoyl cysteine attachment. The stretch at 29–58 (IHNLSKNLASLQKAMRMLKARQYDVIRRLE) forms a coiled coil. An NB-ARC domain is found at 140–444 (SEATPFADVD…SEGFINEKEG (305 aa)). Residue 183–190 (GMGGVGKT) participates in ATP binding. 6 LRR repeats span residues 518–539 (TVRKISLMNNEIEEIFDSHECA), 540–561 (ALTTLFLQKNDVVKISAEFFRC), 564–586 (HLVVLDLSENQSLNELPEEISEL), 588–610 (SLRYFNLSYTCIHQLPVGLWTLK), 611–633 (KLIHLNLEHMSSLGSILGISNLW), and 634–656 (NLRTLGLRDSRLLLDMSLVKELQ).

The protein belongs to the disease resistance NB-LRR family. As to quaternary structure, in uninfected plants, interacts with PBS1 through the coiled coil domain. Homodimer.

It is found in the cell membrane. Its function is as follows. Disease resistance (R) protein that specifically recognizes the avrPphB type III effector avirulence protein from Pseudomonas syringae. Also confers resistance against Hyaloperonospora parasitica (downy mildew). Resistance proteins guard the plant against pathogens that contain an appropriate avirulence protein via an indirect interaction with this avirulence protein. That triggers a defense system including the hypersensitive response, which restricts the pathogen growth. Requires PBS1 to trigger the defense reaction against avrPphB. In case of infection by Pseudomonas syringae, AvrPphB triggers RPS5-mediated defense mechanism via the cleavage of PBS1, suggesting that the cleavage of PBS1 could trigger an exchange of ADP for ATP, thereby activating RPS5. May function as a fine-tuned sensor of alterations in the structure of the effector target PBS1. The sequence is that of Disease resistance protein RPS5 (RPS5) from Arabidopsis thaliana (Mouse-ear cress).